The following is a 222-amino-acid chain: Octanoyltransferase (222 aa).

Residues 32–207 (RDRPDVLMLL…AFARVFGVQC (176 aa)) enclose the BPL/LPL catalytic domain. Residues 72–79 (RGGEVTYH), 139–141 (ALG), and 152–154 (GFA) contribute to the substrate site. The active-site Acyl-thioester intermediate is cysteine 170.

Belongs to the LipB family.

The protein localises to the cytoplasm. It carries out the reaction octanoyl-[ACP] + L-lysyl-[protein] = N(6)-octanoyl-L-lysyl-[protein] + holo-[ACP] + H(+). Its pathway is protein modification; protein lipoylation via endogenous pathway; protein N(6)-(lipoyl)lysine from octanoyl-[acyl-carrier-protein]: step 1/2. Functionally, catalyzes the transfer of endogenously produced octanoic acid from octanoyl-acyl-carrier-protein onto the lipoyl domains of lipoate-dependent enzymes. Lipoyl-ACP can also act as a substrate although octanoyl-ACP is likely to be the physiological substrate. The protein is Octanoyltransferase of Gloeobacter violaceus (strain ATCC 29082 / PCC 7421).